We begin with the raw amino-acid sequence, 103 residues long: Co-chaperonin GroES (103 aa).

This sequence belongs to the GroES chaperonin family. As to quaternary structure, heptamer of 7 subunits arranged in a ring. Interacts with the chaperonin GroEL.

It localises to the cytoplasm. In terms of biological role, together with the chaperonin GroEL, plays an essential role in assisting protein folding. The GroEL-GroES system forms a nano-cage that allows encapsulation of the non-native substrate proteins and provides a physical environment optimized to promote and accelerate protein folding. GroES binds to the apical surface of the GroEL ring, thereby capping the opening of the GroEL channel. The chain is Co-chaperonin GroES from Synechococcus sp. (strain WH7803).